We begin with the raw amino-acid sequence, 127 residues long: Large ribosomal subunit protein bL19 (127 aa).

This sequence belongs to the bacterial ribosomal protein bL19 family.

Functionally, this protein is located at the 30S-50S ribosomal subunit interface and may play a role in the structure and function of the aminoacyl-tRNA binding site. The protein is Large ribosomal subunit protein bL19 of Paraburkholderia phymatum (strain DSM 17167 / CIP 108236 / LMG 21445 / STM815) (Burkholderia phymatum).